The primary structure comprises 437 residues: Adenosylhomocysteinase (437 aa).

Residues T58, D133, and E158 each contribute to the substrate site. T159 to T161 contributes to the NAD(+) binding site. K188 and D192 together coordinate substrate. NAD(+) contacts are provided by residues N193, G224–G229, E245, V301–H303, and N348.

This sequence belongs to the adenosylhomocysteinase family. Homotetramer. The cofactor is NAD(+).

The enzyme catalyses S-adenosyl-L-homocysteine + H2O = L-homocysteine + adenosine. It functions in the pathway amino-acid biosynthesis; L-homocysteine biosynthesis; L-homocysteine from S-adenosyl-L-homocysteine: step 1/1. Functionally, adenosylhomocysteine is a competitive inhibitor of S-adenosyl-L-methionine-dependent methyl transferase reactions; therefore adenosylhomocysteinase may play a key role in the control of methylations via regulation of the intracellular concentration of adenosylhomocysteine. This chain is Adenosylhomocysteinase (ahcy-1), found in Caenorhabditis elegans.